We begin with the raw amino-acid sequence, 352 residues long: Endoplasmic reticulum GDP-fucose transporter (352 aa).

10 helical membrane passes run 9–29 (LGMLFVFIGCCSNVVFLELII), 34–54 (GAGNLITFAQFLFIALEGLVF), 70–90 (YVILVALFFGANVCNNYAFNF), 96–116 (LHMIFRSGSLMANMIMGIVLL), 126–146 (SSVAMITAGIILCTLVSSGDV), 163–183 (FFWWTVGIGLLTIALLVTAYM), 201–221 (ALFFTHMLPLPGFLIMAGNIV), 249–271 (LMLFYLLCNVVTQYVCISAVYVL), 276–298 (ASLTVTLVVTLRKFVSLLFSIIY), and 305–325 (LNHWVGTILVFFGTILFANVI). The short motif at 350-352 (KVE) is the Prevents secretion from ER element.

The protein belongs to the nucleotide-sugar transporter family. SLC35B subfamily.

The protein resides in the endoplasmic reticulum membrane. Functionally, sugar transporter that specifically mediates the transport of UDP-N-acetylglucosamine (UDP-GlcNAc), GDP-fucose and UDP-xylose. Functions redundantly with Gfr in the O-fucosylation of Notch, positively regulating Notch signaling. Involved in the biosynthesis of heparan sulfate-glycosaminoglycan (HS-GAG) and in Dpp signaling in the wing imaginal disk. The protein is Endoplasmic reticulum GDP-fucose transporter of Drosophila melanogaster (Fruit fly).